The primary structure comprises 233 residues: Pyridoxal 5'-phosphate synthase subunit PdxT (233 aa).

61 to 63 (GES) lines the L-glutamine pocket. Cys-93 (nucleophile) is an active-site residue. Residues Arg-127 and 163–164 (IR) each bind L-glutamine. Catalysis depends on charge relay system residues His-212 and Glu-214.

It belongs to the glutaminase PdxT/SNO family. As to quaternary structure, in the presence of PdxS, forms a dodecamer of heterodimers. Only shows activity in the heterodimer.

It carries out the reaction aldehydo-D-ribose 5-phosphate + D-glyceraldehyde 3-phosphate + L-glutamine = pyridoxal 5'-phosphate + L-glutamate + phosphate + 3 H2O + H(+). It catalyses the reaction L-glutamine + H2O = L-glutamate + NH4(+). Its pathway is cofactor biosynthesis; pyridoxal 5'-phosphate biosynthesis. In terms of biological role, catalyzes the hydrolysis of glutamine to glutamate and ammonia as part of the biosynthesis of pyridoxal 5'-phosphate. The resulting ammonia molecule is channeled to the active site of PdxS. This Paenarthrobacter aurescens (strain TC1) protein is Pyridoxal 5'-phosphate synthase subunit PdxT.